Reading from the N-terminus, the 181-residue chain is ATP synthase subunit delta (181 aa).

The protein belongs to the ATPase delta chain family. F-type ATPases have 2 components, F(1) - the catalytic core - and F(0) - the membrane proton channel. F(1) has five subunits: alpha(3), beta(3), gamma(1), delta(1), epsilon(1). F(0) has three main subunits: a(1), b(2) and c(10-14). The alpha and beta chains form an alternating ring which encloses part of the gamma chain. F(1) is attached to F(0) by a central stalk formed by the gamma and epsilon chains, while a peripheral stalk is formed by the delta and b chains.

The protein resides in the cell inner membrane. In terms of biological role, f(1)F(0) ATP synthase produces ATP from ADP in the presence of a proton or sodium gradient. F-type ATPases consist of two structural domains, F(1) containing the extramembraneous catalytic core and F(0) containing the membrane proton channel, linked together by a central stalk and a peripheral stalk. During catalysis, ATP synthesis in the catalytic domain of F(1) is coupled via a rotary mechanism of the central stalk subunits to proton translocation. This protein is part of the stalk that links CF(0) to CF(1). It either transmits conformational changes from CF(0) to CF(1) or is implicated in proton conduction. This chain is ATP synthase subunit delta, found in Chlorobaculum tepidum (strain ATCC 49652 / DSM 12025 / NBRC 103806 / TLS) (Chlorobium tepidum).